A 353-amino-acid polypeptide reads, in one-letter code: C-X-C chemokine receptor type 4 (353 aa).

The interval M1–Y22 is important for chemokine binding and signaling. Topologically, residues M1–R39 are extracellular. The N-linked (GlcNAc...) asparagine glycan is linked to N11. Residue Y12 is modified to Sulfotyrosine. An O-linked (Xyl...) (chondroitin sulfate) serine glycan is attached at S19. Y22 carries the post-translational modification Sulfotyrosine. 2 disulfide bridges follow: C29-C275 and C110-C187. Residues I40–M64 traverse the membrane as a helical segment. The Cytoplasmic portion of the chain corresponds to G65 to R78. Residues L79–V100 form a helical membrane-spanning segment. The interval W95–D98 is chemokine binding. Residues A101–K111 lie on the Extracellular side of the membrane. A helical transmembrane segment spans residues A112–I131. The tract at residues H114 to T118 is chemokine binding. The Cytoplasmic portion of the chain corresponds to S132–K155. Positions D134 to Y136 match the Important for signaling motif. The involved in dimerization; when bound to chemokine stretch occupies residues Y136–P148. The helical transmembrane segment at V156–F175 threads the bilayer. Residues A176 to W196 lie on the Extracellular side of the membrane. A chemokine binding, important for signaling region spans residues C187–Y191. Residues P192–L211 are involved in dimerization. Residues L197–L217 traverse the membrane as a helical segment. The Cytoplasmic segment spans residues S218–T242. The helical transmembrane segment at V243–I262 threads the bilayer. At D263 to K283 the chain is on the extracellular side. The interval L267 to E269 is involved in dimerization. Residues W284–Y303 form a helical membrane-spanning segment. Over A304–S353 the chain is Cytoplasmic. Phosphoserine is present on residues S320 and S322. A phosphoserine; by PKC and GRK6 mark is found at S325 and S326. A disordered region spans residues L330–S353. Phosphoserine; by GRK6 is present on S331. K332 is covalently cross-linked (Glycyl lysine isopeptide (Lys-Gly) (interchain with G-Cter in ubiquitin)). A compositionally biased stretch (low complexity) spans H338–S353. Position 340 is a phosphoserine; by GRK6 (S340). Phosphoserine occurs at positions 349 and 352.

It belongs to the G-protein coupled receptor 1 family. Monomer. Can form homodimers. Interacts with CD164. Interacts with ARRB2; the interaction is dependent on the C-terminal phosphorylation of CXCR4 and allows activation of MAPK1 and MAPK3. Interacts with ARR3; the interaction is dependent on the C-terminal phosphorylation of CXCR4 and modulates calcium mobilization. Interacts with RNF113A; the interaction, enhanced by CXCL12, promotes CXCR4 ubiquitination and subsequent degradation. Interacts (via the cytoplasmic C-terminal) with ITCH (via the WW domains I and II); the interaction, enhanced by CXCL12, promotes CXCR4 ubiquitination and leads to its degradation. Interacts with extracellular ubiquitin. Interacts with DBN1; this interaction is enhanced by antigenic stimulation. Following LPS binding, may form a complex with GDF5, HSP90AA1 and HSPA8. Phosphorylated on agonist stimulation. Rapidly phosphorylated on serine and threonine residues in the C-terminal. Phosphorylation at Ser-325 and Ser-326 leads to recruitment of ITCH, ubiquitination and protein degradation. In terms of processing, ubiquitinated after ligand binding, leading to its degradation. Ubiquitinated by ITCH at the cell membrane on agonist stimulation. The ubiquitin-dependent mechanism, endosomal sorting complex required for transport (ESCRT), then targets CXCR4 for lysosomal degradation. This process is dependent also on prior Ser-/Thr-phosphorylation in the C-terminal of CXCR4. Also binding of ARRB1 to STAM negatively regulates CXCR4 sorting to lysosomes though modulating ubiquitination of SFR5S. Post-translationally, sulfation is required for efficient binding of CXCL12/SDF-1alpha and promotes its dimerization. O- and N-glycosylated. N-glycosylation can mask coreceptor function. The O-glycosylation chondroitin sulfate attachment does not affect interaction with CXCL12/SDF-1alpha nor its coreceptor activity.

The protein resides in the cell membrane. It localises to the cell junction. Its subcellular location is the early endosome. The protein localises to the late endosome. It is found in the lysosome. Its function is as follows. Receptor for the C-X-C chemokine CXCL12/SDF-1 that transduces a signal by increasing intracellular calcium ion levels and enhancing MAPK1/MAPK3 activation. Involved in the AKT signaling cascade. Plays a role in regulation of cell migration, e.g. during wound healing. Acts as a receptor for extracellular ubiquitin; leading to enhanced intracellular calcium ions and reduced cellular cAMP levels. Binds bacterial lipopolysaccharide (LPS) et mediates LPS-induced inflammatory response, including TNF secretion by monocytes. Involved in hematopoiesis and in cardiac ventricular septum formation. Also plays an essential role in vascularization of the gastrointestinal tract, probably by regulating vascular branching and/or remodeling processes in endothelial cells. Involved in cerebellar development. In the CNS, could mediate hippocampal-neuron survival. In Sus scrofa (Pig), this protein is C-X-C chemokine receptor type 4 (CXCR4).